Here is a 369-residue protein sequence, read N- to C-terminus: Cytoplasmic tRNA 2-thiolation protein 1 (369 aa).

This sequence belongs to the TtcA family. CTU1/NCS6/ATPBD3 subfamily.

The protein localises to the cytoplasm. The protein operates within tRNA modification; 5-methoxycarbonylmethyl-2-thiouridine-tRNA biosynthesis. Plays a central role in 2-thiolation of mcm(5)S(2)U at tRNA wobble positions of tRNA(Lys), tRNA(Glu) and tRNA(Gln). Directly binds tRNAs and probably acts by catalyzing adenylation of tRNAs, an intermediate required for 2-thiolation. It is unclear whether it acts as a sulfurtransferase that transfers sulfur from thiocarboxylated URM1 onto the uridine of tRNAs at wobble position. Prior mcm(5) tRNA modification by the elongator complex is required for 2-thiolation. May also be involved in protein urmylation. The chain is Cytoplasmic tRNA 2-thiolation protein 1 from Meyerozyma guilliermondii (strain ATCC 6260 / CBS 566 / DSM 6381 / JCM 1539 / NBRC 10279 / NRRL Y-324) (Yeast).